The following is a 103-amino-acid chain: Large ribosomal subunit protein bL21 (103 aa).

This sequence belongs to the bacterial ribosomal protein bL21 family. As to quaternary structure, part of the 50S ribosomal subunit. Contacts protein L20.

In terms of biological role, this protein binds to 23S rRNA in the presence of protein L20. The polypeptide is Large ribosomal subunit protein bL21 (Actinobacillus pleuropneumoniae serotype 7 (strain AP76)).